The primary structure comprises 313 residues: MPVRIPDHLPAAEVLESENIFVMSETRAANQDIRPMKVLILNLMPNKIETETQLLRLLGNTPLQVDVDLLRIHDKESKHTSIDHMNTFYRDFEAVRHKNYDGLIITGAPLGQIDFEDVVYWDHIREIIDWSQEHVTSVLFLCWAAHAGLYHLYGLNRKILQQKRSGVFVHRRTSQHFPLLRGFDDEFFAPHSRFAEMDVEEIRQHPQLQLLAESDEAGAYLVLSRNNRNLFVMGHPEYQKSTLNEEYQRDLSQGLDPNVPQNYYRNDDPKADAIARWHSHGSLLVSNWLNYYVYQLTPYDLSDMTAMTPWESR.

The Acyl-thioester intermediate role is filled by cysteine 142. The substrate site is built by lysine 163 and serine 192. Histidine 235 serves as the catalytic Proton acceptor. The active site involves glutamate 237. Arginine 249 serves as a coordination point for substrate.

The protein belongs to the MetA family.

It is found in the cytoplasm. It catalyses the reaction L-homoserine + succinyl-CoA = O-succinyl-L-homoserine + CoA. The protein operates within amino-acid biosynthesis; L-methionine biosynthesis via de novo pathway; O-succinyl-L-homoserine from L-homoserine: step 1/1. Transfers a succinyl group from succinyl-CoA to L-homoserine, forming succinyl-L-homoserine. The sequence is that of Homoserine O-succinyltransferase from Shewanella baltica (strain OS223).